Here is a 559-residue protein sequence, read N- to C-terminus: Formate--tetrahydrofolate ligase (559 aa).

68–75 (TPAGEGKT) is a binding site for ATP.

This sequence belongs to the formate--tetrahydrofolate ligase family.

It carries out the reaction (6S)-5,6,7,8-tetrahydrofolate + formate + ATP = (6R)-10-formyltetrahydrofolate + ADP + phosphate. The protein operates within one-carbon metabolism; tetrahydrofolate interconversion. This chain is Formate--tetrahydrofolate ligase, found in Rhizobium rhizogenes (strain K84 / ATCC BAA-868) (Agrobacterium radiobacter).